The primary structure comprises 223 residues: Large ribosomal subunit protein bL25 (223 aa).

A disordered region spans residues 198-223 (EEIGDRPRSAEEGAAPVKERKLRESE).

This sequence belongs to the bacterial ribosomal protein bL25 family. CTC subfamily. As to quaternary structure, part of the 50S ribosomal subunit; part of the 5S rRNA/L5/L18/L25 subcomplex. Contacts the 5S rRNA. Binds to the 5S rRNA independently of L5 and L18.

This is one of the proteins that binds to the 5S RNA in the ribosome where it forms part of the central protuberance. The polypeptide is Large ribosomal subunit protein bL25 (Thermomicrobium roseum (strain ATCC 27502 / DSM 5159 / P-2)).